A 677-amino-acid polypeptide reads, in one-letter code: UvrABC system protein B (677 aa).

Residues 24–412 (EGVLEGVPAQ…EGIVVEQVIR (389 aa)) enclose the Helicase ATP-binding domain. 37–44 (GVTGSGKT) is a binding site for ATP. The Beta-hairpin motif lies at 90–113 (YYDYYQPEAYLPSSDTYIEKDLAI). Positions 429–591 (QIDDLMEEIQ…ITPQQIKKAR (163 aa)) constitute a Helicase C-terminal domain. In terms of domain architecture, UVR spans 635–670 (EKSMERTRKLMQEAAKKLEFIEAAQYRDELLKMEDL).

It belongs to the UvrB family. In terms of assembly, forms a heterotetramer with UvrA during the search for lesions. Interacts with UvrC in an incision complex.

It is found in the cytoplasm. The UvrABC repair system catalyzes the recognition and processing of DNA lesions. A damage recognition complex composed of 2 UvrA and 2 UvrB subunits scans DNA for abnormalities. Upon binding of the UvrA(2)B(2) complex to a putative damaged site, the DNA wraps around one UvrB monomer. DNA wrap is dependent on ATP binding by UvrB and probably causes local melting of the DNA helix, facilitating insertion of UvrB beta-hairpin between the DNA strands. Then UvrB probes one DNA strand for the presence of a lesion. If a lesion is found the UvrA subunits dissociate and the UvrB-DNA preincision complex is formed. This complex is subsequently bound by UvrC and the second UvrB is released. If no lesion is found, the DNA wraps around the other UvrB subunit that will check the other stand for damage. The sequence is that of UvrABC system protein B from Bacteroides fragilis (strain ATCC 25285 / DSM 2151 / CCUG 4856 / JCM 11019 / LMG 10263 / NCTC 9343 / Onslow / VPI 2553 / EN-2).